Consider the following 430-residue polypeptide: Cell wall protein ECM33 (430 aa).

Residues 1–19 (MQFKNALTATAILSASALA) form the signal peptide. 12 N-linked (GlcNAc...) asparagine glycosylation sites follow: N22, N57, N83, N197, N210, N228, N235, N242, N268, N280, N305, and N329. Position 340 is a phosphoserine (S340). Residues 362–402 (LSSTSTESSKSSATSSASSSGDASNAQASVSASASSSSSSS) show a composition bias toward low complexity. The tract at residues 362 to 411 (LSSTSTESSKSSATSSASSSGDASNAQASVSASASSSSSSSKKSKGAAPE) is disordered. G407 is lipidated: GPI-anchor amidated glycine. Positions 408 to 430 (AAPELVPATSFMGVVAAVAVALL) are cleaved as a propeptide — removed in mature form.

The protein belongs to the SPS2 family. The GPI-anchor is attached to the protein in the endoplasmic reticulum and serves to target the protein to the cell surface. There, the glucosamine-inositol phospholipid moiety is cleaved off and the GPI-modified mannoprotein is covalently attached via its lipidless GPI glycan remnant to the 1,6-beta-glucan of the outer cell wall layer.

The protein localises to the cell membrane. It is found in the secreted. The protein resides in the cell wall. Required for proper cell wall integrity and for the correct assembly of the mannoprotein outer layer of the cell wall. Important for apical bud growth. This Saccharomyces cerevisiae (strain JAY291) (Baker's yeast) protein is Cell wall protein ECM33 (ECM33).